We begin with the raw amino-acid sequence, 258 residues long: Clathrin light chain 3 (258 aa).

The segment covering 1 to 18 (MSSTLSNEESGLGDSNRS) has biased composition (polar residues). The disordered stretch occupies residues 1-96 (MSSTLSNEES…PPPSAMEKEE (96 aa)). An N-acetylserine modification is found at Ser2. The span at 34–50 (SRFQSQRFDSSFSNFDS) shows a compositional bias: low complexity. Over residues 66-79 (RPETQSPPSINSFD) the composition is skewed to polar residues. An involved in binding clathrin heavy chain region spans residues 90 to 152 (SAMEKEEGFA…TIENNKKLNR (63 aa)). A coiled-coil region spans residues 105–164 (RLNALRLEEKEKEEKEMVQQILEAAEQYKAEFYSKRNVTIENNKKLNREKEKFFLENQEK). Residues 224 to 234 (LKHNPPTHMKP) show a composition bias toward basic residues. The interval 224 to 258 (LKHNPPTHMKPKLPSPSGADPNVSVSEQVTVTEKL) is disordered. A compositionally biased stretch (polar residues) spans 246–258 (VSVSEQVTVTEKL).

This sequence belongs to the clathrin light chain family. In terms of assembly, clathrin coats are formed from molecules containing 3 heavy chains and 3 light chains.

It is found in the cytoplasmic vesicle membrane. The protein resides in the membrane. It localises to the coated pit. Clathrin is the major protein of the polyhedral coat of coated pits and vesicles. The sequence is that of Clathrin light chain 3 from Arabidopsis thaliana (Mouse-ear cress).